We begin with the raw amino-acid sequence, 265 residues long: Undecaprenyl-diphosphatase (265 aa).

7 consecutive transmembrane segments (helical) span residues 41–61 (IAYT…LIYF), 75–95 (LKFL…LYVI), 104–124 (YNPS…GIYI), 137–157 (LSTK…LPGV), 180–200 (YSYL…LLFT), 215–235 (GIAL…GFLL), and 244–264 (YLID…GLII).

The protein belongs to the UppP family.

Its subcellular location is the cell membrane. The catalysed reaction is di-trans,octa-cis-undecaprenyl diphosphate + H2O = di-trans,octa-cis-undecaprenyl phosphate + phosphate + H(+). Catalyzes the dephosphorylation of undecaprenyl diphosphate (UPP). The polypeptide is Undecaprenyl-diphosphatase (Saccharolobus islandicus (strain Y.G.57.14 / Yellowstone #1) (Sulfolobus islandicus)).